A 206-amino-acid chain; its full sequence is Probable N-acetyltransferase 14 (206 aa).

The 152-residue stretch at 55–206 (LRFVLASFAL…TLVREFSKEL (152 aa)) folds into the N-acetyltransferase domain. The helical transmembrane segment at 57–77 (FVLASFALALLLPVFLAVAAM) threads the bilayer.

Belongs to the camello family.

Its subcellular location is the membrane. Probable acetyltransferase. Its function is as follows. May act as a transcription factor regulating the expression of coproporphyrinogen oxidase by binding to a promoter regulatory element. The chain is Probable N-acetyltransferase 14 from Bos taurus (Bovine).